The following is a 176-amino-acid chain: MSRVGKSPVALQGAEVALSDDRITVKGPLGTITQAANRLVKVVNDNGTLNFEPVDESREANAMSGTMRALVANMVNGVTKGFERKLTLVGVGYRAQAQGDKLNLSLGFSHPVVHQMPEGVKAETPTQTEIVIKGINKQQVGQVAAEVRGYRPPEPYKGKGVRYANEVVILKETKKK.

Belongs to the universal ribosomal protein uL6 family. As to quaternary structure, part of the 50S ribosomal subunit.

This protein binds to the 23S rRNA, and is important in its secondary structure. It is located near the subunit interface in the base of the L7/L12 stalk, and near the tRNA binding site of the peptidyltransferase center. The protein is Large ribosomal subunit protein uL6 of Paraburkholderia phytofirmans (strain DSM 17436 / LMG 22146 / PsJN) (Burkholderia phytofirmans).